The chain runs to 973 residues: Probable outer membrane protein pmp13 (973 aa).

The first 24 residues, 1–24, serve as a signal peptide directing secretion; the sequence is MKTSIRKFLISTTLAPCFASTAFT. A compositionally biased stretch (polar residues) spans 284-293; sequence QNNTASPQNS. The interval 284-303 is disordered; the sequence is QNNTASPQNSLPAPTPPPTP. Residues 691-973 enclose the Autotransporter domain; the sequence is EDVPGKQLSI…TLDIGSKLRF (283 aa).

Belongs to the PMP outer membrane protein family.

Its subcellular location is the secreted. The protein localises to the cell wall. The protein resides in the cell outer membrane. The sequence is that of Probable outer membrane protein pmp13 (pmp13) from Chlamydia pneumoniae (Chlamydophila pneumoniae).